A 150-amino-acid polypeptide reads, in one-letter code: Interferon antagonist OPG027 (150 aa).

It belongs to the orthopoxvirus OPG027 family.

Functionally, inhibits antiviral activity induced by type I interferons. Does not block signal transduction of IFN, but is important to counteract the host antiviral state induced by a pre-treatment with IFN. In Homo sapiens (Human), this protein is Interferon antagonist OPG027 (OPG027).